A 332-amino-acid polypeptide reads, in one-letter code: Galactinol synthase 7 (332 aa).

The active site involves lysine 101. Aspartate 117, aspartate 119, and histidine 255 together coordinate Mn(2+).

Belongs to the glycosyltransferase 8 family. Galactosyltransferase subfamily. The cofactor is a divalent metal cation.

The protein localises to the cytoplasm. It carries out the reaction myo-inositol + UDP-alpha-D-galactose = alpha-D-galactosyl-(1-&gt;3)-1D-myo-inositol + UDP + H(+). In terms of biological role, galactinol synthase involved in the biosynthesis of raffinose family oligosaccharides (RFOs) that function as osmoprotectants. May promote plant stress tolerance. This Arabidopsis thaliana (Mouse-ear cress) protein is Galactinol synthase 7 (GOLS7).